A 140-amino-acid polypeptide reads, in one-letter code: ATP synthase epsilon chain (140 aa).

This sequence belongs to the ATPase epsilon chain family. In terms of assembly, F-type ATPases have 2 components, CF(1) - the catalytic core - and CF(0) - the membrane proton channel. CF(1) has five subunits: alpha(3), beta(3), gamma(1), delta(1), epsilon(1). CF(0) has three main subunits: a, b and c.

It is found in the cell inner membrane. Its function is as follows. Produces ATP from ADP in the presence of a proton gradient across the membrane. This Nitrosomonas europaea (strain ATCC 19718 / CIP 103999 / KCTC 2705 / NBRC 14298) protein is ATP synthase epsilon chain.